The following is a 487-amino-acid chain: FAD-dependent oxidoreductase domain-containing protein 1 (487 aa).

A helical membrane pass occupies residues 62 to 82 (EQADVVIIGGGILGLSVAFWL).

As to quaternary structure, associates with components of the mitochondrial respiratory chain complex I. The cofactor is FAD.

It localises to the mitochondrion inner membrane. Required for the assembly of the mitochondrial membrane respiratory chain NADH dehydrogenase (Complex I). Involved in mid-late stages of complex I assembly. This chain is FAD-dependent oxidoreductase domain-containing protein 1 (Foxred1), found in Mus musculus (Mouse).